Consider the following 136-residue polypeptide: Putative pre-16S rRNA nuclease (136 aa).

It belongs to the YqgF nuclease family.

Its subcellular location is the cytoplasm. Its function is as follows. Could be a nuclease involved in processing of the 5'-end of pre-16S rRNA. This Francisella tularensis subsp. novicida (strain U112) protein is Putative pre-16S rRNA nuclease.